A 112-amino-acid chain; its full sequence is UPF0102 protein NIS_1551 (112 aa).

It belongs to the UPF0102 family.

The polypeptide is UPF0102 protein NIS_1551 (Nitratiruptor sp. (strain SB155-2)).